A 1007-amino-acid chain; its full sequence is Rho-type GTPase-activating protein 1 (1007 aa).

LIM zinc-binding domains follow at residues 13–66 (CVRC…CFDC) and 70–122 (CKNC…CLSC). Disordered regions lie at residues 203 to 293 (ITGY…KSPS), 401 to 478 (EKYS…STSL), and 505 to 600 (KETA…NDPS). The span at 212–221 (NSGSSKFGSN) shows a compositional bias: low complexity. Polar residues-rich tracts occupy residues 250–261 (ANMSLNVATDPT) and 270–293 (HSRN…KSPS). At T278 the chain carries Phosphothreonine. S291 carries the post-translational modification Phosphoserine. The segment covering 411 to 421 (KGRKISRSLSR) has biased composition (basic residues). Basic and acidic residues predominate over residues 454–466 (RSQDLMRDNDSHT). 2 stretches are compositionally biased toward polar residues: residues 467–478 (GLDTPNSNSTSL) and 529–579 (SPAT…LENS). T532 bears the Phosphothreonine mark. A compositionally biased stretch (basic and acidic residues) spans 583 to 600 (EEQKETLYENSESRNDPS). Residues 791-1006 (SSLVARCNYE…FIFGNYKDIL (216 aa)) form the Rho-GAP domain.

Its function is as follows. GTPase-activating protein (GAP) for CDC42 and/or RHO1. Negative regulator of the pheromone-response pathway through the STE20 protein kinase; acts at a step between the G-protein and the MAP kinase module. Dominant suppressor of bud emergence defect caused by deletion of IPL2/BEM2. Involved in the control of polarized cell growth and proper bud site selection. This is Rho-type GTPase-activating protein 1 (RGA1) from Saccharomyces cerevisiae (strain ATCC 204508 / S288c) (Baker's yeast).